The chain runs to 157 residues: Crossover junction endodeoxyribonuclease RuvC (157 aa).

Active-site residues include D9, E70, and D142. Residues D9, E70, and D142 each coordinate Mg(2+).

The protein belongs to the RuvC family. Homodimer which binds Holliday junction (HJ) DNA. The HJ becomes 2-fold symmetrical on binding to RuvC with unstacked arms; it has a different conformation from HJ DNA in complex with RuvA. In the full resolvosome a probable DNA-RuvA(4)-RuvB(12)-RuvC(2) complex forms which resolves the HJ. The cofactor is Mg(2+).

Its subcellular location is the cytoplasm. The enzyme catalyses Endonucleolytic cleavage at a junction such as a reciprocal single-stranded crossover between two homologous DNA duplexes (Holliday junction).. In terms of biological role, the RuvA-RuvB-RuvC complex processes Holliday junction (HJ) DNA during genetic recombination and DNA repair. Endonuclease that resolves HJ intermediates. Cleaves cruciform DNA by making single-stranded nicks across the HJ at symmetrical positions within the homologous arms, yielding a 5'-phosphate and a 3'-hydroxyl group; requires a central core of homology in the junction. The consensus cleavage sequence is 5'-(A/T)TT(C/G)-3'. Cleavage occurs on the 3'-side of the TT dinucleotide at the point of strand exchange. HJ branch migration catalyzed by RuvA-RuvB allows RuvC to scan DNA until it finds its consensus sequence, where it cleaves and resolves the cruciform DNA. The protein is Crossover junction endodeoxyribonuclease RuvC of Cyanothece sp. (strain PCC 7425 / ATCC 29141).